We begin with the raw amino-acid sequence, 327 residues long: Phenylalanine--tRNA ligase alpha subunit (327 aa).

Residue E253 participates in Mg(2+) binding.

The protein belongs to the class-II aminoacyl-tRNA synthetase family. Phe-tRNA synthetase alpha subunit type 1 subfamily. Tetramer of two alpha and two beta subunits. Requires Mg(2+) as cofactor.

The protein localises to the cytoplasm. It carries out the reaction tRNA(Phe) + L-phenylalanine + ATP = L-phenylalanyl-tRNA(Phe) + AMP + diphosphate + H(+). The sequence is that of Phenylalanine--tRNA ligase alpha subunit from Laribacter hongkongensis (strain HLHK9).